A 543-amino-acid chain; its full sequence is Pectate disaccharide-lyase (543 aa).

It belongs to the polysaccharide lyase 2 family. Cu cation is required as a cofactor. Requires Mn(2+) as cofactor. It depends on Ni(2+) as a cofactor.

It is found in the cytoplasm. It catalyses the reaction [(1-&gt;4)-alpha-D-galacturonosyl](n) = 4-(4-deoxy-alpha-D-galact-4-enuronosyl)-D-galacturonate + [(1-&gt;4)-alpha-D-galacturonosyl](n-2). It functions in the pathway glycan metabolism; pectin degradation. In terms of biological role, catalyzes the formation of unsaturated digalacturonates from polygalacturonate or short oligogalacturonates. This chain is Pectate disaccharide-lyase (pelW), found in Dickeya dadantii (strain 3937) (Erwinia chrysanthemi (strain 3937)).